Consider the following 213-residue polypeptide: Nicolin-1 (213 aa).

As to quaternary structure, part of the neuronal tubulin polyglutamylase complex which contains TPGS1, TPGS2, TTLL1, LRRC49 and NICN1. High expression level is found in brain, testis, liver and kidney. Weak expression in spleen, leukocytes, small intestine and colon.

The protein localises to the nucleus. The chain is Nicolin-1 (NICN1) from Homo sapiens (Human).